Reading from the N-terminus, the 415-residue chain is Tyrosine--tRNA ligase (415 aa).

Residues 54–63 carry the 'HIGH' region motif; that stretch reads PTGSNIHLGH. Positions 248-252 match the 'KMSKS' region motif; it reads KMSKT. K251 is an ATP binding site. The S4 RNA-binding domain maps to 351–415; the sequence is AKAFYLMSAV…GKKTFRRLTA (65 aa).

It belongs to the class-I aminoacyl-tRNA synthetase family. TyrS type 2 subfamily. As to quaternary structure, homodimer.

It localises to the cytoplasm. It catalyses the reaction tRNA(Tyr) + L-tyrosine + ATP = L-tyrosyl-tRNA(Tyr) + AMP + diphosphate + H(+). In terms of biological role, catalyzes the attachment of tyrosine to tRNA(Tyr) in a two-step reaction: tyrosine is first activated by ATP to form Tyr-AMP and then transferred to the acceptor end of tRNA(Tyr). In Synechococcus sp. (strain CC9902), this protein is Tyrosine--tRNA ligase.